Consider the following 463-residue polypeptide: UDP-N-acetylmuramate--L-alanine ligase (463 aa).

112 to 118 (GTHGKTT) contacts ATP.

It belongs to the MurCDEF family.

The protein localises to the cytoplasm. It catalyses the reaction UDP-N-acetyl-alpha-D-muramate + L-alanine + ATP = UDP-N-acetyl-alpha-D-muramoyl-L-alanine + ADP + phosphate + H(+). It functions in the pathway cell wall biogenesis; peptidoglycan biosynthesis. Cell wall formation. In Dechloromonas aromatica (strain RCB), this protein is UDP-N-acetylmuramate--L-alanine ligase.